A 471-amino-acid chain; its full sequence is ATP synthase subunit beta (471 aa).

Gly-153 to Thr-160 contacts ATP.

The protein belongs to the ATPase alpha/beta chains family. As to quaternary structure, F-type ATPases have 2 components, CF(1) - the catalytic core - and CF(0) - the membrane proton channel. CF(1) has five subunits: alpha(3), beta(3), gamma(1), delta(1), epsilon(1). CF(0) has four main subunits: a(1), b(1), b'(1) and c(9-12).

It is found in the cell membrane. The catalysed reaction is ATP + H2O + 4 H(+)(in) = ADP + phosphate + 5 H(+)(out). Functionally, produces ATP from ADP in the presence of a proton gradient across the membrane. The catalytic sites are hosted primarily by the beta subunits. This Chloroflexus aggregans (strain MD-66 / DSM 9485) protein is ATP synthase subunit beta.